Reading from the N-terminus, the 329-residue chain is Sex comb on midleg-like protein 1 (329 aa).

Phosphoserine occurs at positions 138 and 238. The interval 138–157 (SPTLPVSRRENNSPSNLPRP) is disordered. The SAM domain occupies 258 to 325 (WSVEAVVLFL…YYIDRLKQGK (68 aa)).

The protein belongs to the SCM family. Ubiquitous. Expressed in fetal and adult tissues.

It is found in the nucleus. In terms of biological role, putative Polycomb group (PcG) protein. PcG proteins act by forming multiprotein complexes, which are required to maintain the transcriptionally repressive state of homeotic genes throughout development. May be involved in spermatogenesis during sexual maturation. In Homo sapiens (Human), this protein is Sex comb on midleg-like protein 1 (SCML1).